Here is a 201-residue protein sequence, read N- to C-terminus: 3-isopropylmalate dehydratase small subunit (201 aa).

It belongs to the LeuD family. LeuD type 1 subfamily. Heterodimer of LeuC and LeuD.

It catalyses the reaction (2R,3S)-3-isopropylmalate = (2S)-2-isopropylmalate. It participates in amino-acid biosynthesis; L-leucine biosynthesis; L-leucine from 3-methyl-2-oxobutanoate: step 2/4. Its function is as follows. Catalyzes the isomerization between 2-isopropylmalate and 3-isopropylmalate, via the formation of 2-isopropylmaleate. The polypeptide is 3-isopropylmalate dehydratase small subunit (Micrococcus luteus (strain ATCC 4698 / DSM 20030 / JCM 1464 / CCM 169 / CCUG 5858 / IAM 1056 / NBRC 3333 / NCIMB 9278 / NCTC 2665 / VKM Ac-2230) (Micrococcus lysodeikticus)).